We begin with the raw amino-acid sequence, 217 residues long: Probable transaldolase (217 aa).

The active-site Schiff-base intermediate with substrate is K83.

This sequence belongs to the transaldolase family. Type 3B subfamily.

The protein resides in the cytoplasm. It carries out the reaction D-sedoheptulose 7-phosphate + D-glyceraldehyde 3-phosphate = D-erythrose 4-phosphate + beta-D-fructose 6-phosphate. Its pathway is carbohydrate degradation; pentose phosphate pathway; D-glyceraldehyde 3-phosphate and beta-D-fructose 6-phosphate from D-ribose 5-phosphate and D-xylulose 5-phosphate (non-oxidative stage): step 2/3. Functionally, transaldolase is important for the balance of metabolites in the pentose-phosphate pathway. This chain is Probable transaldolase, found in Ruegeria sp. (strain TM1040) (Silicibacter sp.).